We begin with the raw amino-acid sequence, 252 residues long: Triosephosphate isomerase (252 aa).

9–11 provides a ligand contact to substrate; the sequence is NWK. Catalysis depends on His95, which acts as the Electrophile. Residue Glu167 is the Proton acceptor of the active site. Residues Gly173, Ser213, and 234–235 each bind substrate; that span reads GG.

Belongs to the triosephosphate isomerase family. As to quaternary structure, homodimer.

The protein localises to the cytoplasm. The enzyme catalyses D-glyceraldehyde 3-phosphate = dihydroxyacetone phosphate. It functions in the pathway carbohydrate biosynthesis; gluconeogenesis. The protein operates within carbohydrate degradation; glycolysis; D-glyceraldehyde 3-phosphate from glycerone phosphate: step 1/1. In terms of biological role, involved in the gluconeogenesis. Catalyzes stereospecifically the conversion of dihydroxyacetone phosphate (DHAP) to D-glyceraldehyde-3-phosphate (G3P). The polypeptide is Triosephosphate isomerase (Syntrophotalea carbinolica (strain DSM 2380 / NBRC 103641 / GraBd1) (Pelobacter carbinolicus)).